Reading from the N-terminus, the 460-residue chain is Diguanylate cyclase DosC (460 aa).

Residue His-98 participates in heme binding. Residues 325–458 (TPLSVLIIDV…GRNRVELWKA (134 aa)) form the GGDEF domain. Asp-333 contacts Mg(2+). Substrate is bound by residues Asn-341 and Asp-350. Residue Asp-376 coordinates Mg(2+). Residue Asp-376 is the Proton acceptor of the active site.

Requires heme as cofactor. Mg(2+) serves as cofactor.

It carries out the reaction 2 GTP = 3',3'-c-di-GMP + 2 diphosphate. It functions in the pathway purine metabolism; 3',5'-cyclic di-GMP biosynthesis. Globin-coupled heme-based oxygen sensor protein displaying diguanylate cyclase (DGC) activity in response to oxygen availability. Thus, catalyzes the synthesis of cyclic diguanylate (c-di-GMP) via the condensation of 2 GTP molecules. Cyclic-di-GMP is a second messenger which controls cell surface-associated traits in bacteria. This chain is Diguanylate cyclase DosC (dosC), found in Escherichia coli O157:H7.